A 485-amino-acid polypeptide reads, in one-letter code: Terminase, large subunit (485 aa).

ADP contacts are provided by residues 17-22, 40-45, and R79; these read KPHHVQ and QSGKSE. The segment at 22–197 is ATPase activity; sequence QLAIHRSTAK…EFFLMGWRGG (176 aa). ATP contacts are provided by Q97 and Q99. The Walker A motif signature appears at 125–131; it reads SEFRGKS. A Walker B motif motif is present at residues 145–150; the sequence is FVILDE. Residue E150 is the For ATPase activity of the active site. Residues 256-438 form a nuclease region; sequence SNSVFSGLDM…DIVMSLALAY (183 aa). The Mg(2+) site is built by D294, D347, and D429.

Belongs to the Tequatrovirus large terminase family. As to quaternary structure, interacts with the terminase small subunit; the active complex is composed of a pentamer of terminase large subunits and a dodecamer of terminase small subunits. Interacts with the portal protein. Mg(2+) serves as cofactor.

Functionally, the terminase large subunit acts as an ATP driven molecular motor necessary for viral DNA translocation into empty capsids and as an endonuclease that cuts the viral genome to initiate and to end a packaging reaction The terminase lies at a unique vertex of the procapsid and is composed of two subunits, a small terminase subunit involved in viral DNA recognition (packaging sequence), and a large terminase subunit possessing endonucleolytic and ATPase activities. Both terminase subunits heterooligomerize and are docked on the portal protein to form the packaging machine. The terminase large subunit exhibits endonuclease activity and cleaves the viral genome concatemer. Once the capsid is packaged with the DNA, the terminase complex is substituted by the tail. The chain is Terminase, large subunit from Thermus thermophilus (Thermus thermophilus phage P23-45).